The primary structure comprises 606 residues: Retrovirus-related Pol polyprotein from type-1 retrotransposable element R2 (606 aa).

A Reverse transcriptase domain is found at 1-208 (GTLANIIMLE…NTFKYLGLTF (208 aa)). Positions 331–606 (IFNIEGPARS…PPDPPRPVPP (276 aa)) are nucleic acid-binding endonuclease.

It catalyses the reaction DNA(n) + a 2'-deoxyribonucleoside 5'-triphosphate = DNA(n+1) + diphosphate. The polypeptide is Retrovirus-related Pol polyprotein from type-1 retrotransposable element R2 (Popillia japonica (Japanese beetle)).